A 1427-amino-acid chain; its full sequence is Protein expanded (1427 aa).

Positions 26–399 (RFLALRLLGQ…DTHQWSMKLA (374 aa)) constitute an FERM domain. Residues 176 to 212 (GDAPPGTSNSKDDSGEETSASPSNGGRGLSATTTLPK) are disordered. The span at 192–211 (ETSASPSNGGRGLSATTTLP) shows a compositional bias: polar residues. Tyrosine 227 and tyrosine 423 each carry phosphotyrosine. Disordered stretches follow at residues 520-566 (VRPQ…IGSQ) and 611-656 (NSAL…SGVY). The span at 524–544 (DASSNGATIVTNSSVQRNSMG) shows a compositional bias: polar residues. A compositionally biased stretch (low complexity) spans 545–559 (TTANDSSTATDSPSS). Residue tyrosine 679 is modified to Phosphotyrosine. Residues 688–710 (EETHVQHSDSVDGKKKEDFRPRS) show a composition bias toward basic and acidic residues. 5 disordered regions span residues 688–732 (EETH…DNKH), 766–792 (YVTL…YSAR), 815–880 (APKP…SLKS), 939–963 (HNSN…HRHS), and 1000–1022 (LAPP…HPHL). At tyrosine 766 the chain carries Phosphotyrosine. The span at 818–838 (PDSPPCSPPVPPAPIPAPPPA) shows a compositional bias: pro residues. The RXPPXY motif motif lies at 842-847 (RDPPPY). Residues 848 to 859 (SISSKPRPTSLI) are compositionally biased toward polar residues. Low complexity predominate over residues 860 to 877 (SVSSSAHPAPSAAGSMSS). Basic residues predominate over residues 951 to 963 (LHHHHVPSHHRHS). Residues 1001-1019 (APPPPSLPRQPPPPPPPNH) are compositionally biased toward pro residues. The short motif at 1008–1020 (PRQPPPPPPPNHP) is the SH3-binding element. Tyrosine 1103 carries the post-translational modification Phosphotyrosine. The SH3-binding signature appears at 1149–1157 (PPPPPPLHP). Position 1181 is a phosphoserine (serine 1181). 2 disordered regions span residues 1190–1267 (DLLP…WAGE) and 1345–1398 (TGQE…LPVQ). Pro residues-rich tracts occupy residues 1214–1230 (PPMP…PSKP) and 1237–1246 (PIPPRKPPTL). Composition is skewed to polar residues over residues 1253–1262 (SPLTKTSSGA) and 1345–1370 (TGQE…SSAG). Residues 1376–1388 (KARKGSTVSHRHP) are compositionally biased toward basic residues.

In terms of assembly, forms a complex with Kibra and Mer. Interacts (via RXPPXY motif) with Kibra (via domain WW 1). Interacts with Mer and Hpo (via SARAH domain). Interacts with Schip1; the interaction results in recruitment of Schip1 to the apical cell membrane. Interacts with ack and yki. Phosphorylated by Ack at several tyrosines including Tyr-227, Tyr-423, Tyr-679, Tyr-766 and Tyr-1103.

It is found in the apical cell membrane. In terms of biological role, activates the Hippo/SWH (Sav/Wts/Hpo) signaling pathway, a signaling pathway that plays a pivotal role in organ size control and tumor suppression by restricting proliferation and promoting apoptosis. The core of this pathway is composed of a kinase cascade wherein Hippo (Hpo), in complex with its regulatory protein Salvador (Sav), phosphorylates and activates Warts (Wts) in complex with its regulatory protein Mats, which in turn phosphorylates and inactivates the Yorkie (Yki) oncoprotein. Ex acts synergistically along with Mer and Kibra to regulate the Hippo signaling pathway. Involved in the control of cell proliferation in imaginal disks. May bind to certain proteins of signal transduction pathways by interaction with their SH3 domains. Required for apical localization of Schip1. This chain is Protein expanded (ex), found in Drosophila melanogaster (Fruit fly).